The following is a 678-amino-acid chain: Photosystem I P700 chlorophyll a apoprotein A1 (678 aa).

8 helical membrane passes run 75 to 98, 152 to 175, 192 to 216, 266 to 284, 302 to 325, 341 to 367, 384 to 406, and 458 to 476; these read VFAA…FHGA, LKVI…FHMH, STHH…HISL, SAMH…SVLG, WHLV…QMSN, VSLF…IGLV, IILG…LYVH, and FMVT…LILV. Cysteine 500 and cysteine 509 together coordinate [4Fe-4S] cluster. Helical transmembrane passes span 516-537 and 591-613; these read HVFL…HFFW and LAAY…MFLF. Residue histidine 602 coordinates chlorophyll a'. Chlorophyll a contacts are provided by methionine 610 and tyrosine 618. Tryptophan 619 serves as a coordination point for phylloquinone. Residues 651-671 traverse the membrane as a helical segment; that stretch reads AVGFTHYLLGGIGSTWSFFLA.

It belongs to the PsaA/PsaB family. The PsaA/B heterodimer binds the P700 chlorophyll special pair and subsequent electron acceptors. PSI consists of a core antenna complex that captures photons, and an electron transfer chain that converts photonic excitation into a charge separation. The eukaryotic PSI reaction center is composed of at least 11 subunits. Requires P700 is a chlorophyll a/chlorophyll a' dimer, A0 is one or more chlorophyll a, A1 is one or both phylloquinones and FX is a shared 4Fe-4S iron-sulfur center. as cofactor.

The protein localises to the plastid. It localises to the chloroplast thylakoid membrane. It carries out the reaction reduced [plastocyanin] + hnu + oxidized [2Fe-2S]-[ferredoxin] = oxidized [plastocyanin] + reduced [2Fe-2S]-[ferredoxin]. Functionally, psaA and PsaB bind P700, the primary electron donor of photosystem I (PSI), as well as the electron acceptors A0, A1 and FX. PSI is a plastocyanin/cytochrome c6-ferredoxin oxidoreductase, converting photonic excitation into a charge separation, which transfers an electron from the donor P700 chlorophyll pair to the spectroscopically characterized acceptors A0, A1, FX, FA and FB in turn. Oxidized P700 is reduced on the lumenal side of the thylakoid membrane by plastocyanin or cytochrome c6. This Amphidinium carterae (Dinoflagellate) protein is Photosystem I P700 chlorophyll a apoprotein A1.